The primary structure comprises 340 residues: Anthranilate phosphoribosyltransferase (340 aa).

Residues G79, 82-83, T87, 89-92, 107-115, and S119 contribute to the 5-phospho-alpha-D-ribose 1-diphosphate site; these read GD, NIST, and KHGNRAVTG. G79 lines the anthranilate pocket. Mg(2+) is bound at residue S91. Residue N110 participates in anthranilate binding. Residue R165 coordinates anthranilate. Mg(2+) is bound by residues D224 and E225.

Belongs to the anthranilate phosphoribosyltransferase family. In terms of assembly, homodimer. Mg(2+) is required as a cofactor.

It carries out the reaction N-(5-phospho-beta-D-ribosyl)anthranilate + diphosphate = 5-phospho-alpha-D-ribose 1-diphosphate + anthranilate. Its pathway is amino-acid biosynthesis; L-tryptophan biosynthesis; L-tryptophan from chorismate: step 2/5. Catalyzes the transfer of the phosphoribosyl group of 5-phosphorylribose-1-pyrophosphate (PRPP) to anthranilate to yield N-(5'-phosphoribosyl)-anthranilate (PRA). The protein is Anthranilate phosphoribosyltransferase of Syntrophomonas wolfei subsp. wolfei (strain DSM 2245B / Goettingen).